Here is a 579-residue protein sequence, read N- to C-terminus: YTH domain-containing family protein 2 (579 aa).

Positions 1–45 (MSASSLLEQRPKGQGNKVQNGSVHQKDGLNDDDFEPYLSPQARPN) are disordered. Ser2 is subject to N-acetylserine. Phosphoserine occurs at positions 2, 4, 5, 22, 39, and 196. A localization to mRNA processing bodies (P-bodies) region spans residues 2–384 (SASSLLEQRP…QAGSGSTPSE (383 aa)). The disordered stretch occupies residues 247-387 (AKQQPKLKTK…SGSTPSEPHP (141 aa)). Residues 291-316 (ALVQNIGQPTQGSPQHVGQQANNSPP) show a composition bias toward polar residues. Over residues 337–349 (AQLSVQQQAAQPT) the composition is skewed to low complexity. Ser359 is subject to Phosphoserine. Positions 359–371 (SGFGHNGVDGNGV) are enriched in gly residues. Residues 372–383 (GQSQAGSGSTPS) show a composition bias toward polar residues. Residues 385 to 579 (PHPVLEKLRS…VKKERQGRGK (195 aa)) are interaction with m6A-containing mRNAs. Ser394 is subject to Phosphoserine. Residues 410 to 544 (GRVFIIKSYS…EKAKQVLKII (135 aa)) form the YTH domain. RNA-binding positions include 416 to 418 (KSY), Asp422, 432 to 433 (WC), Asn462, Trp486, and Trp491.

The protein belongs to the YTHDF family. YTHDF2 subfamily. As to quaternary structure, interacts with CNOT1; interaction is direct and promotes recruitment of the CCR4-NOT complex. Interacts with YTHDF3. Interacts with RIDA/HRSP12; interaction leads to recruitment of the ribonuclease P/MRP complex. Ubiquitinated by the SCF(SKP2) complex, leading to its degradation.

It is found in the cytoplasm. Its subcellular location is the cytosol. The protein localises to the P-body. It localises to the stress granule. The protein resides in the nucleus. Its function is as follows. Specifically recognizes and binds N6-methyladenosine (m6A)-containing RNAs, and regulates their stability. M6A is a modification present at internal sites of mRNAs and some non-coding RNAs and plays a role in mRNA stability and processing. Acts as a regulator of mRNA stability by promoting degradation of m6A-containing mRNAs via interaction with the CCR4-NOT and ribonuclease P/MRP complexes, depending on the context. The YTHDF paralogs (YTHDF1, YTHDF2 and YTHDF3) share m6A-containing mRNAs targets and act redundantly to mediate mRNA degradation and cellular differentiation. M6A-containing mRNAs containing a binding site for RIDA/HRSP12 (5'-GGUUC-3') are preferentially degraded by endoribonucleolytic cleavage: cooperative binding of RIDA/HRSP12 and YTHDF2 to transcripts leads to recruitment of the ribonuclease P/MRP complex. Other m6A-containing mRNAs undergo deadenylation via direct interaction between YTHDF2 and CNOT1, leading to recruitment of the CCR4-NOT and subsequent deadenylation of m6A-containing mRNAs. Required maternally to regulate oocyte maturation: probably acts by binding to m6A-containing mRNAs, thereby regulating maternal transcript dosage during oocyte maturation, which is essential for the competence of oocytes to sustain early zygotic development. Also required during spermatogenesis: regulates spermagonial adhesion by promoting degradation of m6A-containing transcripts coding for matrix metallopeptidases. Also involved in hematopoietic stem cells specification by binding to m6A-containing mRNAs, leading to promote their degradation. Also acts as a regulator of neural development by promoting m6A-dependent degradation of neural development-related mRNA targets. Inhibits neural specification of induced pluripotent stem cells by binding to methylated neural-specific mRNAs and promoting their degradation, thereby restraining neural differentiation. Regulates circadian regulation of hepatic lipid metabolism: acts by promoting m6A-dependent degradation of PPARA transcripts. Regulates the innate immune response to infection by inhibiting the type I interferon response: acts by binding to m6A-containing IFNB transcripts and promoting their degradation. May also act as a promoter of cap-independent mRNA translation following heat shock stress: upon stress, relocalizes to the nucleus and specifically binds mRNAs with some m6A methylation mark at their 5'-UTR, protecting demethylation of mRNAs by FTO, thereby promoting cap-independent mRNA translation. Regulates mitotic entry by promoting the phase-specific m6A-dependent degradation of WEE1 transcripts. Promotes formation of phase-separated membraneless compartments, such as P-bodies or stress granules, by undergoing liquid-liquid phase separation upon binding to mRNAs containing multiple m6A-modified residues: polymethylated mRNAs act as a multivalent scaffold for the binding of YTHDF proteins, juxtaposing their disordered regions and thereby leading to phase separation. The resulting mRNA-YTHDF complexes then partition into different endogenous phase-separated membraneless compartments, such as P-bodies, stress granules or neuronal RNA granules. May also recognize and bind RNAs modified by C5-methylcytosine (m5C) and act as a regulator of rRNA processing. In Macaca fascicularis (Crab-eating macaque), this protein is YTH domain-containing family protein 2.